A 374-amino-acid chain; its full sequence is Putative clathrin assembly protein At1g33340 (374 aa).

The ENTH domain maps to 30–163 (YNEKAFFDIE…GWIINQAGKL (134 aa)).

Its subcellular location is the membrane. The protein localises to the clathrin-coated pit. The protein resides in the golgi apparatus. It localises to the cytoplasmic vesicle. It is found in the clathrin-coated vesicle. In Arabidopsis thaliana (Mouse-ear cress), this protein is Putative clathrin assembly protein At1g33340.